Here is a 217-residue protein sequence, read N- to C-terminus: Ribosomal RNA small subunit methyltransferase G (217 aa).

Residues Gly79, Leu84, 130 to 131 (IE), and Arg148 contribute to the S-adenosyl-L-methionine site.

The protein belongs to the methyltransferase superfamily. RNA methyltransferase RsmG family.

The protein resides in the cytoplasm. It carries out the reaction guanosine(527) in 16S rRNA + S-adenosyl-L-methionine = N(7)-methylguanosine(527) in 16S rRNA + S-adenosyl-L-homocysteine. In terms of biological role, specifically methylates the N7 position of guanine in position 527 of 16S rRNA. In Desulfotalea psychrophila (strain LSv54 / DSM 12343), this protein is Ribosomal RNA small subunit methyltransferase G.